The chain runs to 267 residues: 4-hydroxy-tetrahydrodipicolinate reductase (267 aa).

NAD(+) contacts are provided by residues 8–13 (GIAGRM), E34, 98–100 (GST), and 122–125 (SPNM). Residue H155 is the Proton donor/acceptor of the active site. H156 is a binding site for (S)-2,3,4,5-tetrahydrodipicolinate. The active-site Proton donor is the K159. 165–166 (GT) provides a ligand contact to (S)-2,3,4,5-tetrahydrodipicolinate.

Belongs to the DapB family.

It localises to the cytoplasm. It catalyses the reaction (S)-2,3,4,5-tetrahydrodipicolinate + NAD(+) + H2O = (2S,4S)-4-hydroxy-2,3,4,5-tetrahydrodipicolinate + NADH + H(+). The catalysed reaction is (S)-2,3,4,5-tetrahydrodipicolinate + NADP(+) + H2O = (2S,4S)-4-hydroxy-2,3,4,5-tetrahydrodipicolinate + NADPH + H(+). Its pathway is amino-acid biosynthesis; L-lysine biosynthesis via DAP pathway; (S)-tetrahydrodipicolinate from L-aspartate: step 4/4. Its function is as follows. Catalyzes the conversion of 4-hydroxy-tetrahydrodipicolinate (HTPA) to tetrahydrodipicolinate. In Syntrophobacter fumaroxidans (strain DSM 10017 / MPOB), this protein is 4-hydroxy-tetrahydrodipicolinate reductase.